A 750-amino-acid polypeptide reads, in one-letter code: Photosystem I P700 chlorophyll a apoprotein A1 (750 aa).

Transmembrane regions (helical) follow at residues V70–A93, L156–H179, L195–L219, I291–Y309, W346–Y369, L385–V411, A433–H455, and F531–L549. Residues C573 and C582 each contribute to the [4Fe-4S] cluster site. The next 2 helical transmembrane spans lie at H589–W610 and L664–F686. H675 provides a ligand contact to chlorophyll a'. M683 and Y691 together coordinate chlorophyll a. W692 serves as a coordination point for phylloquinone. A helical membrane pass occupies residues A724–A744.

Belongs to the PsaA/PsaB family. As to quaternary structure, the PsaA/B heterodimer binds the P700 chlorophyll special pair and subsequent electron acceptors. PSI consists of a core antenna complex that captures photons, and an electron transfer chain that converts photonic excitation into a charge separation. The eukaryotic PSI reaction center is composed of at least 11 subunits. The cofactor is P700 is a chlorophyll a/chlorophyll a' dimer, A0 is one or more chlorophyll a, A1 is one or both phylloquinones and FX is a shared 4Fe-4S iron-sulfur center..

It is found in the plastid. It localises to the chloroplast thylakoid membrane. It catalyses the reaction reduced [plastocyanin] + hnu + oxidized [2Fe-2S]-[ferredoxin] = oxidized [plastocyanin] + reduced [2Fe-2S]-[ferredoxin]. PsaA and PsaB bind P700, the primary electron donor of photosystem I (PSI), as well as the electron acceptors A0, A1 and FX. PSI is a plastocyanin-ferredoxin oxidoreductase, converting photonic excitation into a charge separation, which transfers an electron from the donor P700 chlorophyll pair to the spectroscopically characterized acceptors A0, A1, FX, FA and FB in turn. Oxidized P700 is reduced on the lumenal side of the thylakoid membrane by plastocyanin. In Calycanthus floridus var. glaucus (Eastern sweetshrub), this protein is Photosystem I P700 chlorophyll a apoprotein A1.